The sequence spans 412 residues: Orcinol synthase (412 aa).

Active-site residues include C164, H322, and N355.

It belongs to the thiolase-like superfamily. Chalcone/stilbene synthases family. As to quaternary structure, homodimer. As to expression, mainly expressed in young leaves, and barely in mature leaves and twigs.

The catalysed reaction is 3 malonyl-CoA + acetyl-CoA + 3 H(+) = orcinol + 4 CO2 + 4 CoA. It carries out the reaction 3 malonyl-CoA + acetyl-CoA + 2 H(+) = orsellinate + 3 CO2 + 4 CoA. The enzyme catalyses 3 malonyl-CoA + acetyl-CoA + 3 H(+) = tetraacetate lactone + 3 CO2 + 4 CoA. It catalyses the reaction 2 malonyl-CoA + acetyl-CoA + 2 H(+) = triacetate lactone + 2 CO2 + 3 CoA. The catalysed reaction is 3 malonyl-CoA + acetyl-CoA + 3 H(+) = 2-acetylphloroglucinol + 3 CO2 + 4 CoA. It functions in the pathway secondary metabolite biosynthesis; terpenoid biosynthesis. Involved in the biosynthesis of acetate-derived aromatic tetraketides natural products, precursors of daurichromenic acid, an anti-human immunodeficiency viruses (HIV) meroterpenoid consisting of sesquiterpene and orsellinic acid (OSA) moieties. Accepts acetyl-CoA as starter substrate and produces orcinol as the major reaction product, along with four minor products including OSA, tetraacetate lactone, triacetate lactone and 2-acetylphloroglucinol. This Rhododendron dauricum (Azalea daurica) protein is Orcinol synthase.